A 191-amino-acid polypeptide reads, in one-letter code: Adenylate kinase (191 aa).

10-15 (AAGKGT) contributes to the ATP binding site. Residues 30–59 (STGDMLRAAIASGSELGQRVKGVLDRGELV) are NMP. AMP-binding positions include Thr-31, Arg-36, 57-59 (ELV), 85-88 (GFPR), and Gln-92. An LID region spans residues 126–136 (KRFEEQGRPDD). Arg-127 lines the ATP pocket. Residues Arg-133 and Arg-144 each contribute to the AMP site. An ATP-binding site is contributed by Gly-172.

The protein belongs to the adenylate kinase family. Monomer.

The protein resides in the cytoplasm. It carries out the reaction AMP + ATP = 2 ADP. It participates in purine metabolism; AMP biosynthesis via salvage pathway; AMP from ADP: step 1/1. Its function is as follows. Catalyzes the reversible transfer of the terminal phosphate group between ATP and AMP. Plays an important role in cellular energy homeostasis and in adenine nucleotide metabolism. This Caulobacter vibrioides (strain ATCC 19089 / CIP 103742 / CB 15) (Caulobacter crescentus) protein is Adenylate kinase.